The sequence spans 505 residues: Peroxisome proliferator-activated receptor gamma (505 aa).

O-linked (GlcNAc) threonine glycosylation is present at Thr-84. Position 112 is a phosphoserine (Ser-112). A DNA-binding region (nuclear receptor) is located at residues 136 to 210 (AIECRVCGDK…VGMSHNAIRF (75 aa)). 2 consecutive NR C4-type zinc fingers follow at residues 139-159 (CRVCGDKASGFHYGVHACEGC) and 176-198 (CDLNCRIHKKSRNKCQYCRFQKC). The interval 205 to 280 (HNAIRFGRMP…DKSPFVIYDM (76 aa)) is interaction with FAM120B. An NR LBD domain is found at 238 to 503 (DLRALAKHLY…HPLLQEIYKD (266 aa)). Residue Lys-252 forms a Glycyl lysine isopeptide (Lys-Gly) (interchain with G-Cter in ubiquitin) linkage. Rosiglitazone-binding positions include 314 to 317 (QFRS), His-351, His-477, and Tyr-501. Residues 495-503 (PLLQEIYKD) carry the 9aaTAD motif.

Belongs to the nuclear hormone receptor family. NR1 subfamily. In terms of assembly, interacts with FOXO1 (acetylated form). Heterodimer with other nuclear receptors, such as RXRA. The heterodimer with the retinoic acid receptor RXRA is called adipocyte-specific transcription factor ARF6. Interacts with NCOA6 coactivator, leading to a strong increase in transcription of target genes. Interacts with coactivator PPARBP, leading to a mild increase in transcription of target genes. Interacts with NOCA7 in a ligand-inducible manner. Interacts with NCOA1 and NCOA2 LXXLL motifs. Interacts with ASXL1, ASXL2, DNTTIP2, FAM120B, MAP2K1/MEK1, NR0B2, PDPK1, PRDM16, PRMT2 and TGFB1I1. Interacts (when activated by agonist) with PPP5C. Interacts with HELZ2 and THRAP3; the interaction stimulates the transcriptional activity of PPARG. Interacts with PER2, the interaction is ligand dependent and blocks PPARG recruitment to target promoters. Interacts with NOCT. Interacts with ACTN4. Interacts (when in the liganded conformation) with GPS2. Interacts with CRY1 and CRY2 in a ligand-dependent manner. In the absence of hormonal ligand, interacts with TACC1. In macrophages, interacts with PAQR3 and STUB1; the interactions promote PPARG poylubiquitination and STUB1-mediated degradation. Post-translationally, O-GlcNAcylation at Thr-84 reduces transcriptional activity in adipocytes. Phosphorylated in basal conditions and dephosphorylated when treated with the ligand. May be dephosphorylated by PPP5C. The phosphorylated form may be inactive and dephosphorylation at Ser-112 induces adipogenic activity. In terms of processing, ubiquitinated by E3 ubiquitin-protein ligase complex containing FBXO9; leading to proteasomal degradation. Ubiquitinated at Lys-252 by TRIM55 leading to proteasomal degradation. Ubiquitinated by E3 ubiquitin-protein ligase STUB1/CHIP; leading to proteasomal degradation. Highest expression in adipose tissue. Lower in skeletal muscle, spleen, heart and liver. Also detectable in placenta, lung and ovary.

It localises to the nucleus. It is found in the cytoplasm. PDPK1 activates its transcriptional activity independently of its kinase activity. Functionally, nuclear receptor that binds peroxisome proliferators such as hypolipidemic drugs and fatty acids. Once activated by a ligand, the nuclear receptor binds to DNA specific PPAR response elements (PPRE) and modulates the transcription of its target genes, such as acyl-CoA oxidase. It therefore controls the peroxisomal beta-oxidation pathway of fatty acids. Key regulator of adipocyte differentiation and glucose homeostasis. ARF6 acts as a key regulator of the tissue-specific adipocyte P2 (aP2) enhancer. Acts as a critical regulator of gut homeostasis by suppressing NF-kappa-B-mediated pro-inflammatory responses. Plays a role in the regulation of cardiovascular circadian rhythms by regulating the transcription of BMAL1 in the blood vessels. Its function is as follows. (Microbial infection) Upon treatment with M.tuberculosis or its lipoprotein LpqH, phosphorylation of MAPK p38 and IL-6 production are modulated, probably via this protein. This Homo sapiens (Human) protein is Peroxisome proliferator-activated receptor gamma (PPARG).